Reading from the N-terminus, the 111-residue chain is Large ribosomal subunit protein uL22 (111 aa).

The protein belongs to the universal ribosomal protein uL22 family. As to quaternary structure, part of the 50S ribosomal subunit.

Functionally, this protein binds specifically to 23S rRNA; its binding is stimulated by other ribosomal proteins, e.g. L4, L17, and L20. It is important during the early stages of 50S assembly. It makes multiple contacts with different domains of the 23S rRNA in the assembled 50S subunit and ribosome. Its function is as follows. The globular domain of the protein is located near the polypeptide exit tunnel on the outside of the subunit, while an extended beta-hairpin is found that lines the wall of the exit tunnel in the center of the 70S ribosome. The polypeptide is Large ribosomal subunit protein uL22 (Acidithiobacillus ferrooxidans (strain ATCC 23270 / DSM 14882 / CIP 104768 / NCIMB 8455) (Ferrobacillus ferrooxidans (strain ATCC 23270))).